The chain runs to 67 residues: Protein AaeX (67 aa).

2 helical membrane-spanning segments follow: residues 10–30 (FGLS…LFFV) and 43–63 (FVWH…YLLF).

Belongs to the AaeX family.

The protein resides in the cell membrane. The protein is Protein AaeX of Pectobacterium atrosepticum (strain SCRI 1043 / ATCC BAA-672) (Erwinia carotovora subsp. atroseptica).